The chain runs to 593 residues: Translation initiation factor IF-2 (593 aa).

The tr-type G domain maps to 101–270; it reads LRPPVVTIMG…LLIAELEDLR (170 aa). Positions 110–117 are G1; the sequence is GHVDHGKT. Residue 110–117 participates in GTP binding; that stretch reads GHVDHGKT. The interval 135–139 is G2; sequence GITQH. The segment at 156–159 is G3; it reads DTPG. Residues 156–160 and 210–213 contribute to the GTP site; these read DTPGH and NKMD. Residues 210–213 form a G4 region; it reads NKMD. Residues 246–248 are G5; sequence SAR.

Belongs to the TRAFAC class translation factor GTPase superfamily. Classic translation factor GTPase family. IF-2 subfamily.

Its subcellular location is the cytoplasm. Its function is as follows. One of the essential components for the initiation of protein synthesis. Protects formylmethionyl-tRNA from spontaneous hydrolysis and promotes its binding to the 30S ribosomal subunits. Also involved in the hydrolysis of GTP during the formation of the 70S ribosomal complex. The sequence is that of Translation initiation factor IF-2 from Dehalococcoides mccartyi (strain CBDB1).